A 543-amino-acid chain; its full sequence is CTP synthase (543 aa).

Positions 1-265 (MARYIFITGG…DDEVLAAFAI (265 aa)) are amidoligase domain. Residue serine 13 participates in CTP binding. UTP is bound at residue serine 13. 14 to 19 (SLGKGL) contributes to the ATP binding site. Residue tyrosine 54 participates in L-glutamine binding. Aspartate 71 provides a ligand contact to ATP. Residues aspartate 71 and glutamate 139 each coordinate Mg(2+). CTP contacts are provided by residues 146-148 (DIE), 186-191 (KTKPTQ), and lysine 222. UTP contacts are provided by residues 186-191 (KTKPTQ) and lysine 222. 238-240 (RDA) contacts ATP. The 252-residue stretch at 291–542 (TIAIVGKYTG…IEAALVRSRL (252 aa)) folds into the Glutamine amidotransferase type-1 domain. Glycine 353 lines the L-glutamine pocket. Catalysis depends on cysteine 380, which acts as the Nucleophile; for glutamine hydrolysis. L-glutamine is bound by residues 381–384 (FGMQ), glutamate 404, and arginine 470. Residues histidine 515 and glutamate 517 contribute to the active site.

It belongs to the CTP synthase family. In terms of assembly, homotetramer.

It catalyses the reaction UTP + L-glutamine + ATP + H2O = CTP + L-glutamate + ADP + phosphate + 2 H(+). It carries out the reaction L-glutamine + H2O = L-glutamate + NH4(+). The enzyme catalyses UTP + NH4(+) + ATP = CTP + ADP + phosphate + 2 H(+). It functions in the pathway pyrimidine metabolism; CTP biosynthesis via de novo pathway; CTP from UDP: step 2/2. Its activity is regulated as follows. Allosterically activated by GTP, when glutamine is the substrate; GTP has no effect on the reaction when ammonia is the substrate. The allosteric effector GTP functions by stabilizing the protein conformation that binds the tetrahedral intermediate(s) formed during glutamine hydrolysis. Inhibited by the product CTP, via allosteric rather than competitive inhibition. Functionally, catalyzes the ATP-dependent amination of UTP to CTP with either L-glutamine or ammonia as the source of nitrogen. Regulates intracellular CTP levels through interactions with the four ribonucleotide triphosphates. The protein is CTP synthase of Rhodopseudomonas palustris (strain HaA2).